The sequence spans 370 residues: Pantothenate kinase 3 (370 aa).

The active-site Proton acceptor is glutamate 138. The acetyl-CoA site is built by serine 192, serine 195, and arginine 207.

Belongs to the type II pantothenate kinase family. Homodimer. In terms of tissue distribution, highly expressed in the liver.

Its subcellular location is the cytoplasm. The enzyme catalyses (R)-pantothenate + ATP = (R)-4'-phosphopantothenate + ADP + H(+). It functions in the pathway cofactor biosynthesis; coenzyme A biosynthesis; CoA from (R)-pantothenate: step 1/5. With respect to regulation, subject to allosteric regulation, exists in two distinct conformational states, a catalytically incompetent (or open) conformation stabilized by the binding of acetyl(acyl)-CoA, and a catalytically competent (or closed) conformation stabilized by ATP-binding. Acetyl-CoA and its thioesters act as allosteric inhibitors and compete with the ATP-binding site. Strongly inhibited by acetyl-CoA, malonyl-CoA and palmitoyl CoA and modestly inhibited by CoA. Inhibited by calcium hopantenate. Catalyzes the phosphorylation of pantothenate to generate 4'-phosphopantothenate in the first and rate-determining step of coenzyme A (CoA) synthesis. This Mus musculus (Mouse) protein is Pantothenate kinase 3 (Pank3).